The sequence spans 554 residues: Solute carrier family 22 member 22 (554 aa).

Residues 1-15 (MDFDEILHHVGDSGR) are Cytoplasmic-facing. A helical membrane pass occupies residues 16 to 36 (FQICMIILLNILSLVLSPHDV). Residues 37–144 (LENFTAAIPA…DLVCDFQSFK (108 aa)) are Extracellular-facing. Asparagine 39 carries an N-linked (GlcNAc...) asparagine glycan. Residues 145 to 165 (YYAQATSLAGHLVSCPLSGII) form a helical membrane-spanning segment. Residues 166–172 (SDRFGRK) are Cytoplasmic-facing. A helical membrane pass occupies residues 173-193 (PLLMYCSLAYGAVGTYCAFAP). N-linked (GlcNAc...) asparagine glycosylation is present at asparagine 194. Residues 194–199 (NFSVYC) lie on the Extracellular side of the membrane. The chain crosses the membrane as a helical span at residues 200–220 (VLRFLLSAFQSTILINSLILV). The Cytoplasmic portion of the chain corresponds to 221–231 (LEEASVQWHPT). A helical membrane pass occupies residues 232–252 (IIVLSGLFNSIGQGVLGGLAY). Residues 253-258 (VISDWH) are Extracellular-facing. Residues 259 to 279 (LLQLAYALPFFIFFVLFCWVP) traverse the membrane as a helical segment. Residues 280 to 347 (ESVRWLIITG…DIFINPLIRK (68 aa)) lie on the Cytoplasmic side of the membrane. A helical membrane pass occupies residues 348-368 (IVLSNSSLLFAELFSFVGLLL). Topologically, residues 369 to 376 (DVQLLGKN) are extracellular. Residues 377–397 (MFLTQIFLGAIDVPSKSLTYF) form a helical membrane-spanning segment. Residues 398–405 (TIRNVSRR) lie on the Cytoplasmic side of the membrane. A helical membrane pass occupies residues 406 to 426 (PLIAFLLLTTGSCITITIFIS). Residues 427-434 (EEMYVLRT) lie on the Extracellular side of the membrane. A helical membrane pass occupies residues 435-455 (IIFILGKGCFAAFTCISTTYI). At 456-466 (NELSPVELRST) the chain is on the cytoplasmic side. Residues 467-487 (LNGVFLAVVRLAGVLSALTLA) form a helical membrane-spanning segment. The Extracellular segment spans residues 488-491 (TRKY). A helical transmembrane segment spans residues 492 to 512 (FVYLPMILYGVLPIVATISIL). Residues 513 to 554 (FLPETFNLPHTDIIKDMEKRKRLMSKNISKKEGQDFLETTEC) are Cytoplasmic-facing.

Belongs to the major facilitator (TC 2.A.1) superfamily. Organic cation transporter (TC 2.A.1.19) family. In terms of tissue distribution, specifically expressed in kidney where it is found in proximal convoluted tubules (at protein level). Colocalizes with the prostaglandin-inactivating enzyme HPGD in kidney (at protein level). Not detected in other tissues tested.

It is found in the basolateral cell membrane. Its function is as follows. Sodium-independent organic anion transporter which exhibits high specificity for a subset of prostaglandins including prostaglandin E2 (PGE2), prostaglandin E1 (PGE1), prostaglandin F2-alpha (PGF2-alpha) and prostaglandin D2 (PGD2). The chain is Solute carrier family 22 member 22 from Mus musculus (Mouse).